The sequence spans 136 residues: Small ribosomal subunit protein uS19 (136 aa).

Belongs to the universal ribosomal protein uS19 family.

Its function is as follows. Protein S19 forms a complex with S13 that binds strongly to the 16S ribosomal RNA. The sequence is that of Small ribosomal subunit protein uS19 from Methanothrix thermoacetophila (strain DSM 6194 / JCM 14653 / NBRC 101360 / PT) (Methanosaeta thermophila).